Reading from the N-terminus, the 753-residue chain is 5-methyltetrahydropteroyltriglutamate--homocysteine methyltransferase (753 aa).

5-methyltetrahydropteroyltri-L-glutamate contacts are provided by residues 17–20 (RELK) and K117. L-homocysteine-binding positions include 431–433 (IGS) and E484. L-methionine is bound by residues 431 to 433 (IGS) and E484. 5-methyltetrahydropteroyltri-L-glutamate contacts are provided by residues 515-516 (RC) and W561. D599 lines the L-homocysteine pocket. Position 599 (D599) interacts with L-methionine. A 5-methyltetrahydropteroyltri-L-glutamate-binding site is contributed by E605. H641, C643, and E665 together coordinate Zn(2+). The active-site Proton donor is the H694. C726 serves as a coordination point for Zn(2+).

It belongs to the vitamin-B12 independent methionine synthase family. Zn(2+) serves as cofactor.

The enzyme catalyses 5-methyltetrahydropteroyltri-L-glutamate + L-homocysteine = tetrahydropteroyltri-L-glutamate + L-methionine. It participates in amino-acid biosynthesis; L-methionine biosynthesis via de novo pathway; L-methionine from L-homocysteine (MetE route): step 1/1. Functionally, catalyzes the transfer of a methyl group from 5-methyltetrahydrofolate to homocysteine resulting in methionine formation. The chain is 5-methyltetrahydropteroyltriglutamate--homocysteine methyltransferase from Escherichia coli O157:H7 (strain EC4115 / EHEC).